The sequence spans 89 residues: Putative regulatory protein BPUM_1466 (89 aa).

The protein belongs to the RemA family.

This Bacillus pumilus (strain SAFR-032) protein is Putative regulatory protein BPUM_1466.